The chain runs to 538 residues: Serine/threonine-protein phosphatase 5 (538 aa).

TPR repeat units lie at residues 13 to 46 (AEEF…NSNN), 48 to 80 (VYWA…DSRY), and 81 to 114 (SKGY…SPND). 2 helical membrane passes run 163–183 (SSMP…VVAV) and 185–205 (GFAT…TFWW). Positions 282, 284, 311, and 343 each coordinate Mn(2+). Residue His-344 is the Proton donor of the active site. Positions 392 and 467 each coordinate Mn(2+).

Belongs to the PPP phosphatase family. PP-5 (PP-T) subfamily. Interacts with PHYA and PHYB, mostly when they are phosphorylated and in Pfr forms. Mn(2+) is required as a cofactor.

Its subcellular location is the endoplasmic reticulum membrane. The protein resides in the nucleus membrane. It is found in the cytoplasm. The protein localises to the nucleus. It localises to the nucleoplasm. Its subcellular location is the nucleus speckle. The catalysed reaction is O-phospho-L-seryl-[protein] + H2O = L-seryl-[protein] + phosphate. It catalyses the reaction O-phospho-L-threonyl-[protein] + H2O = L-threonyl-[protein] + phosphate. With respect to regulation, activated by arachidonic acid (AA). In terms of biological role, isoform 2 dephosphorylates phosphorylated phytochromes, with a preference toward Pfr forms, and enhances phytochrome-mediated photoresponses, probably by enhancing their stability and their binding affinity for light signal transducers such as NDPK2. Can use para-nitrophenylphosphate (pNPP) as substrate. The sequence is that of Serine/threonine-protein phosphatase 5 (PAPP5) from Arabidopsis thaliana (Mouse-ear cress).